We begin with the raw amino-acid sequence, 202 residues long: Translation initiation factor IF-3 (202 aa).

Belongs to the IF-3 family. Monomer.

Its subcellular location is the cytoplasm. IF-3 binds to the 30S ribosomal subunit and shifts the equilibrium between 70S ribosomes and their 50S and 30S subunits in favor of the free subunits, thus enhancing the availability of 30S subunits on which protein synthesis initiation begins. In Prochlorococcus marinus (strain MIT 9211), this protein is Translation initiation factor IF-3.